A 478-amino-acid chain; its full sequence is tRNA(Ile)-lysidine synthase (478 aa).

27–32 (SGGSDS) contributes to the ATP binding site.

This sequence belongs to the tRNA(Ile)-lysidine synthase family.

The protein resides in the cytoplasm. It carries out the reaction cytidine(34) in tRNA(Ile2) + L-lysine + ATP = lysidine(34) in tRNA(Ile2) + AMP + diphosphate + H(+). In terms of biological role, ligates lysine onto the cytidine present at position 34 of the AUA codon-specific tRNA(Ile) that contains the anticodon CAU, in an ATP-dependent manner. Cytidine is converted to lysidine, thus changing the amino acid specificity of the tRNA from methionine to isoleucine. This chain is tRNA(Ile)-lysidine synthase, found in Rickettsia rickettsii (strain Iowa).